A 529-amino-acid polypeptide reads, in one-letter code: Peptide chain release factor 3 (529 aa).

A tr-type G domain is found at 11–280 (AKRRTFAIIS…GLVEWAPAPM (270 aa)). Residues 20-27 (SHPDAGKT), 88-92 (DTPGH), and 142-145 (NKLD) each bind GTP.

This sequence belongs to the TRAFAC class translation factor GTPase superfamily. Classic translation factor GTPase family. PrfC subfamily.

Its subcellular location is the cytoplasm. Increases the formation of ribosomal termination complexes and stimulates activities of RF-1 and RF-2. It binds guanine nucleotides and has strong preference for UGA stop codons. It may interact directly with the ribosome. The stimulation of RF-1 and RF-2 is significantly reduced by GTP and GDP, but not by GMP. In Salmonella arizonae (strain ATCC BAA-731 / CDC346-86 / RSK2980), this protein is Peptide chain release factor 3.